Here is a 505-residue protein sequence, read N- to C-terminus: 2,3-bisphosphoglycerate-independent phosphoglycerate mutase (505 aa).

Mn(2+) is bound by residues aspartate 11 and serine 61. Residue serine 61 is the Phosphoserine intermediate of the active site. Residues histidine 122, 152 to 153 (RD), arginine 183, arginine 189, 259 to 262 (RTDR), and lysine 332 each bind substrate. Positions 399, 403, 440, 441, and 458 each coordinate Mn(2+).

This sequence belongs to the BPG-independent phosphoglycerate mutase family. As to quaternary structure, monomer. Requires Mn(2+) as cofactor.

The enzyme catalyses (2R)-2-phosphoglycerate = (2R)-3-phosphoglycerate. It functions in the pathway carbohydrate degradation; glycolysis; pyruvate from D-glyceraldehyde 3-phosphate: step 3/5. Functionally, catalyzes the interconversion of 2-phosphoglycerate and 3-phosphoglycerate. The polypeptide is 2,3-bisphosphoglycerate-independent phosphoglycerate mutase (Flavobacterium psychrophilum (strain ATCC 49511 / DSM 21280 / CIP 103535 / JIP02/86)).